A 363-amino-acid polypeptide reads, in one-letter code: GDSL esterase/lipase At2g24560 (363 aa).

Residues 1 to 22 form the signal peptide; sequence MSTSKTITFTLFIAALLSSCDA. Asn-25 carries N-linked (GlcNAc...) asparagine glycosylation. Residue Ser-41 is the Nucleophile of the active site. Asn-103 and Asn-325 each carry an N-linked (GlcNAc...) asparagine glycan. Active-site residues include Asp-333 and His-336.

Belongs to the 'GDSL' lipolytic enzyme family.

It is found in the secreted. The polypeptide is GDSL esterase/lipase At2g24560 (Arabidopsis thaliana (Mouse-ear cress)).